An 883-amino-acid chain; its full sequence is Valine--tRNA ligase (883 aa).

Positions Pro-46–His-56 match the 'HIGH' region motif. The short motif at Lys-520–Ser-524 is the 'KMSKS' region element. ATP is bound at residue Lys-523. Positions Leu-809 to Arg-844 form a coiled coil.

It belongs to the class-I aminoacyl-tRNA synthetase family. ValS type 1 subfamily. Monomer.

It localises to the cytoplasm. It carries out the reaction tRNA(Val) + L-valine + ATP = L-valyl-tRNA(Val) + AMP + diphosphate. Catalyzes the attachment of valine to tRNA(Val). As ValRS can inadvertently accommodate and process structurally similar amino acids such as threonine, to avoid such errors, it has a 'posttransfer' editing activity that hydrolyzes mischarged Thr-tRNA(Val) in a tRNA-dependent manner. The chain is Valine--tRNA ligase from Streptococcus agalactiae serotype V (strain ATCC BAA-611 / 2603 V/R).